The primary structure comprises 396 residues: Protein TOC75-4, chloroplastic (396 aa).

Topologically, residues 1 to 23 are chloroplast intermembrane; it reads MEAVKEAVRKIKSLVIPHADEKD. A beta stranded membrane pass occupies residues 24–32; the sequence is NGIVFEIKL. The Cytoplasmic segment spans residues 33 to 87; it reads NETDQRVEKWGLDPSLDFFEVTGNCNLGRPNSEGSNQSLMGSVTIRNIFNPKLDD. Residues 88-96 traverse the membrane as a beta stranded segment; sequence LLSKIEYVR. Over 97 to 140 the chain is Chloroplast intermembrane; sequence FLEAVKKPRNRTFKTSFFNSRKLSPVFTGGPGYEDLVPPMFVGR. A beta stranded membrane pass occupies residues 141 to 148; that stretch reads DCLKATIT. The Cytoplasmic segment spans residues 149-156; that stretch reads ENLTRQRE. The chain crosses the membrane as a beta stranded span at residues 157 to 164; sequence LTYGVMFE. Residues 165–271 are Chloroplast intermembrane-facing; the sequence is EIITRDENRR…VEEGSDKPQP (107 aa). Residues 272–280 traverse the membrane as a beta stranded segment; sequence PVLVLHGRY. Over 281-292 the chain is Cytoplasmic; that stretch reads GGCIGDLPSYDV. The chain crosses the membrane as a beta stranded span at residues 293-301; the sequence is FALGGPNSV. The Chloroplast intermembrane segment spans residues 302 to 363; it reads RGYSMGELGA…LYRKMGHGSS (62 aa). The chain crosses the membrane as a beta stranded span at residues 364-370; that stretch reads YGLGVKL. The Cytoplasmic portion of the chain corresponds to 371 to 384; sequence GMVRAEYTVRHNRG. Residues 385–392 form a beta stranded membrane-spanning segment; it reads TGALFLRF. Residues 393 to 396 lie on the Chloroplast intermembrane side of the membrane; sequence GERY.

The protein belongs to the TOC75 family. As to quaternary structure, part of the TOC core complex that includes a protein for the specific recognition of transit peptides surrounded by a ring composed of four proteins forming translocation channels, and four to five GTP-binding proteins providing energy. This core complex can interact with components of the TIC complex to form a larger import complex. Chloroplastic protein precursors also interacts with these complexes. Expressed ubiquitously at low levels.

Its subcellular location is the plastid. It localises to the chloroplast outer membrane. In terms of biological role, mediates the insertion of proteins targeted to the outer membrane of chloroplasts. Required for the import of protein precursors into chloroplasts. Forms the voltage-dependent preprotein translocation channels (hydrophilic beta barrel) of the TOC complex in the chloroplastic outer membrane. Required for etioplast formation and/or etioplast-chloroplast transition during deetiolation. The chain is Protein TOC75-4, chloroplastic (TOC75-4) from Arabidopsis thaliana (Mouse-ear cress).